A 342-amino-acid polypeptide reads, in one-letter code: Holliday junction branch migration complex subunit RuvB (342 aa).

The interval 1–185 (MREDYLKSDD…FGINARLEYY (185 aa)) is large ATPase domain (RuvB-L). ATP contacts are provided by residues L24, R25, G66, K69, T70, T71, 132 to 134 (EDY), R175, Y185, and R222. Residue T70 participates in Mg(2+) binding. The tract at residues 186-256 (DAKLLTRIVQ…IARIALQALN (71 aa)) is small ATPAse domain (RuvB-S). Positions 259–342 (HNGLDDMDNR…PPAQSGTLFE (84 aa)) are head domain (RuvB-H). Positions 314 and 319 each coordinate DNA.

The protein belongs to the RuvB family. Homohexamer. Forms an RuvA(8)-RuvB(12)-Holliday junction (HJ) complex. HJ DNA is sandwiched between 2 RuvA tetramers; dsDNA enters through RuvA and exits via RuvB. An RuvB hexamer assembles on each DNA strand where it exits the tetramer. Each RuvB hexamer is contacted by two RuvA subunits (via domain III) on 2 adjacent RuvB subunits; this complex drives branch migration. In the full resolvosome a probable DNA-RuvA(4)-RuvB(12)-RuvC(2) complex forms which resolves the HJ.

The protein localises to the cytoplasm. It catalyses the reaction ATP + H2O = ADP + phosphate + H(+). The RuvA-RuvB-RuvC complex processes Holliday junction (HJ) DNA during genetic recombination and DNA repair, while the RuvA-RuvB complex plays an important role in the rescue of blocked DNA replication forks via replication fork reversal (RFR). RuvA specifically binds to HJ cruciform DNA, conferring on it an open structure. The RuvB hexamer acts as an ATP-dependent pump, pulling dsDNA into and through the RuvAB complex. RuvB forms 2 homohexamers on either side of HJ DNA bound by 1 or 2 RuvA tetramers; 4 subunits per hexamer contact DNA at a time. Coordinated motions by a converter formed by DNA-disengaged RuvB subunits stimulates ATP hydrolysis and nucleotide exchange. Immobilization of the converter enables RuvB to convert the ATP-contained energy into a lever motion, pulling 2 nucleotides of DNA out of the RuvA tetramer per ATP hydrolyzed, thus driving DNA branch migration. The RuvB motors rotate together with the DNA substrate, which together with the progressing nucleotide cycle form the mechanistic basis for DNA recombination by continuous HJ branch migration. Branch migration allows RuvC to scan DNA until it finds its consensus sequence, where it cleaves and resolves cruciform DNA. The sequence is that of Holliday junction branch migration complex subunit RuvB from Cytophaga hutchinsonii (strain ATCC 33406 / DSM 1761 / CIP 103989 / NBRC 15051 / NCIMB 9469 / D465).